The following is a 508-amino-acid chain: Light-independent protochlorophyllide reductase subunit B (508 aa).

Residue aspartate 36 participates in [4Fe-4S] cluster binding. Catalysis depends on aspartate 294, which acts as the Proton donor. 429–430 (GM) contributes to the substrate binding site.

Belongs to the ChlB/BchB/BchZ family. As to quaternary structure, protochlorophyllide reductase is composed of three subunits; ChlL, ChlN and ChlB. Forms a heterotetramer of two ChlB and two ChlN subunits. [4Fe-4S] cluster serves as cofactor.

It carries out the reaction chlorophyllide a + oxidized 2[4Fe-4S]-[ferredoxin] + 2 ADP + 2 phosphate = protochlorophyllide a + reduced 2[4Fe-4S]-[ferredoxin] + 2 ATP + 2 H2O. The protein operates within porphyrin-containing compound metabolism; chlorophyll biosynthesis (light-independent). Component of the dark-operative protochlorophyllide reductase (DPOR) that uses Mg-ATP and reduced ferredoxin to reduce ring D of protochlorophyllide (Pchlide) to form chlorophyllide a (Chlide). This reaction is light-independent. The NB-protein (ChlN-ChlB) is the catalytic component of the complex. The chain is Light-independent protochlorophyllide reductase subunit B from Rippkaea orientalis (strain PCC 8801 / RF-1) (Cyanothece sp. (strain PCC 8801)).